The chain runs to 183 residues: Protein FAM180B (183 aa).

The signal sequence occupies residues 1-23 (MAATLQFLVCLVVAICLLSGVTT).

Belongs to the FAM180 family.

The protein localises to the secreted. The polypeptide is Protein FAM180B (FAM180B) (Homo sapiens (Human)).